The following is a 382-amino-acid chain: Secreted triacylglycerol lipase LIP5 (382 aa).

Residues Cys-40 and Cys-211 are joined by a disulfide bond. Residue Asn-115 is glycosylated (N-linked (GlcNAc...) asparagine). Ser-124 functions as the Nucleophile in the catalytic mechanism. Asn-157 and Asn-232 each carry an N-linked (GlcNAc...) asparagine glycan. Residues Asp-271 and His-305 contribute to the active site. An N-linked (GlcNAc...) asparagine glycan is attached at Asn-346.

It belongs to the AB hydrolase superfamily. Lipase family. Class Lip subfamily.

It is found in the secreted. The catalysed reaction is a triacylglycerol + H2O = a diacylglycerol + a fatty acid + H(+). It catalyses the reaction a monoacylglycerol + H2O = glycerol + a fatty acid + H(+). It carries out the reaction a diacylglycerol + H2O = a monoacylglycerol + a fatty acid + H(+). Secreted lipase that hydrolyzes acylglycerol lipids such as triacylglycerols and consequently releases free fatty acid. Can hydrolyze 4-nitrophenyl palmitate to release 4-nitrophenol and palmitoic acid. Due to an absence of fatty acid synthase genes in Malassezia species, secretory lipases are essential for the yeast to generate free fatty acids from degradation of sebum and assimilate them as lipid sources for growth. Plays important roles not only in lipid metabolism but also in the immune response of host cells and pathogenesis. The chain is Secreted triacylglycerol lipase LIP5 from Malassezia furfur (Pityriasis versicolor infection agent).